The sequence spans 88 residues: Small ribosomal subunit protein bS20 (88 aa).

A compositionally biased stretch (basic residues) spans 1–22 (MANIKSSKKRSIQSEKKRKYNS). A disordered region spans residues 1-26 (MANIKSSKKRSIQSEKKRKYNSSKKS).

The protein belongs to the bacterial ribosomal protein bS20 family.

Functionally, binds directly to 16S ribosomal RNA. The chain is Small ribosomal subunit protein bS20 from Wigglesworthia glossinidia brevipalpis.